The following is a 517-amino-acid chain: Ribonuclease Y (517 aa).

A helical transmembrane segment spans residues 2–22; it reads EILVYIIIGIAIFILSLLVGI. One can recognise a KH domain in the interval 207–267; the sequence is TTSTVALPTD…LRREIAKRTL (61 aa). An HD domain is found at 333–426; it reads VLEHSIEVAQ…VAASDALSAS (94 aa).

The protein belongs to the RNase Y family.

It localises to the cell membrane. Functionally, endoribonuclease that initiates mRNA decay. This is Ribonuclease Y from Petrotoga mobilis (strain DSM 10674 / SJ95).